Here is a 438-residue protein sequence, read N- to C-terminus: Enolase (438 aa).

Residue glutamine 174 coordinates (2R)-2-phosphoglycerate. The active-site Proton donor is the glutamate 216. Residues aspartate 253, glutamate 297, and aspartate 324 each coordinate Mg(2+). Lysine 349, arginine 378, serine 379, and lysine 400 together coordinate (2R)-2-phosphoglycerate. Catalysis depends on lysine 349, which acts as the Proton acceptor.

It belongs to the enolase family. As to quaternary structure, component of the RNA degradosome, a multiprotein complex involved in RNA processing and mRNA degradation. It depends on Mg(2+) as a cofactor.

The protein resides in the cytoplasm. The protein localises to the secreted. It localises to the cell surface. The enzyme catalyses (2R)-2-phosphoglycerate = phosphoenolpyruvate + H2O. It participates in carbohydrate degradation; glycolysis; pyruvate from D-glyceraldehyde 3-phosphate: step 4/5. Its function is as follows. Catalyzes the reversible conversion of 2-phosphoglycerate (2-PG) into phosphoenolpyruvate (PEP). It is essential for the degradation of carbohydrates via glycolysis. This Psychrobacter cryohalolentis (strain ATCC BAA-1226 / DSM 17306 / VKM B-2378 / K5) protein is Enolase.